A 155-amino-acid chain; its full sequence is 6,7-dimethyl-8-ribityllumazine synthase (155 aa).

5-amino-6-(D-ribitylamino)uracil-binding positions include Tyr-23, 57–59 (AWE), and 81–83 (CVI). Residue 86–87 (ET) coordinates (2S)-2-hydroxy-3-oxobutyl phosphate. The Proton donor role is filled by His-89. Phe-114 contacts 5-amino-6-(D-ribitylamino)uracil. Arg-128 contacts (2S)-2-hydroxy-3-oxobutyl phosphate.

This sequence belongs to the DMRL synthase family.

The catalysed reaction is (2S)-2-hydroxy-3-oxobutyl phosphate + 5-amino-6-(D-ribitylamino)uracil = 6,7-dimethyl-8-(1-D-ribityl)lumazine + phosphate + 2 H2O + H(+). It functions in the pathway cofactor biosynthesis; riboflavin biosynthesis; riboflavin from 2-hydroxy-3-oxobutyl phosphate and 5-amino-6-(D-ribitylamino)uracil: step 1/2. Catalyzes the formation of 6,7-dimethyl-8-ribityllumazine by condensation of 5-amino-6-(D-ribitylamino)uracil with 3,4-dihydroxy-2-butanone 4-phosphate. This is the penultimate step in the biosynthesis of riboflavin. This is 6,7-dimethyl-8-ribityllumazine synthase from Rhodopirellula baltica (strain DSM 10527 / NCIMB 13988 / SH1).